The chain runs to 290 residues: 1D-myo-inositol 2-acetamido-2-deoxy-alpha-D-glucopyranoside deacetylase (290 aa).

His17, Asp20, and His150 together coordinate Zn(2+).

It belongs to the MshB deacetylase family. Zn(2+) serves as cofactor.

It carries out the reaction 1D-myo-inositol 2-acetamido-2-deoxy-alpha-D-glucopyranoside + H2O = 1D-myo-inositol 2-amino-2-deoxy-alpha-D-glucopyranoside + acetate. In terms of biological role, catalyzes the deacetylation of 1D-myo-inositol 2-acetamido-2-deoxy-alpha-D-glucopyranoside (GlcNAc-Ins) in the mycothiol biosynthesis pathway. In Corynebacterium glutamicum (strain R), this protein is 1D-myo-inositol 2-acetamido-2-deoxy-alpha-D-glucopyranoside deacetylase.